A 654-amino-acid polypeptide reads, in one-letter code: DNA ligase (654 aa).

Residues 34 to 38 (DLEYD), 83 to 84 (SL), and E114 contribute to the NAD(+) site. The N6-AMP-lysine intermediate role is filled by K116. Positions 137, 171, 280, and 304 each coordinate NAD(+). Positions 396, 399, 414, and 419 each coordinate Zn(2+). One can recognise a BRCT domain in the interval 577–654 (VISTILSGYT…EEQFYDLIKQ (78 aa)).

Belongs to the NAD-dependent DNA ligase family. LigA subfamily. The cofactor is Mg(2+). It depends on Mn(2+) as a cofactor.

It catalyses the reaction NAD(+) + (deoxyribonucleotide)n-3'-hydroxyl + 5'-phospho-(deoxyribonucleotide)m = (deoxyribonucleotide)n+m + AMP + beta-nicotinamide D-nucleotide.. DNA ligase that catalyzes the formation of phosphodiester linkages between 5'-phosphoryl and 3'-hydroxyl groups in double-stranded DNA using NAD as a coenzyme and as the energy source for the reaction. It is essential for DNA replication and repair of damaged DNA. The chain is DNA ligase from Mycoplasmopsis agalactiae (strain NCTC 10123 / CIP 59.7 / PG2) (Mycoplasma agalactiae).